Consider the following 363-residue polypeptide: Phosphoserine aminotransferase (363 aa).

L-glutamate is bound at residue R42. Residues 76–77 (GR), W102, T156, D175, and Q198 each bind pyridoxal 5'-phosphate. K199 is subject to N6-(pyridoxal phosphate)lysine. 240–241 (NT) is a binding site for pyridoxal 5'-phosphate.

Belongs to the class-V pyridoxal-phosphate-dependent aminotransferase family. SerC subfamily. As to quaternary structure, homodimer. Pyridoxal 5'-phosphate serves as cofactor.

The protein resides in the cytoplasm. It catalyses the reaction O-phospho-L-serine + 2-oxoglutarate = 3-phosphooxypyruvate + L-glutamate. The catalysed reaction is 4-(phosphooxy)-L-threonine + 2-oxoglutarate = (R)-3-hydroxy-2-oxo-4-phosphooxybutanoate + L-glutamate. It functions in the pathway amino-acid biosynthesis; L-serine biosynthesis; L-serine from 3-phospho-D-glycerate: step 2/3. Its pathway is cofactor biosynthesis; pyridoxine 5'-phosphate biosynthesis; pyridoxine 5'-phosphate from D-erythrose 4-phosphate: step 3/5. Catalyzes the reversible conversion of 3-phosphohydroxypyruvate to phosphoserine and of 3-hydroxy-2-oxo-4-phosphonooxybutanoate to phosphohydroxythreonine. The polypeptide is Phosphoserine aminotransferase (Shewanella frigidimarina (strain NCIMB 400)).